The chain runs to 303 residues: MFVQILGSAAGGGFPQWNCNCVNCAGFRDGSLNAQARTQSSIAISDDGVNWVLCNASPDIRAQLQSFAPMQPGRALRDTGISAIILMDSQIDHTTGLLSLREGCPHQVWCTDMVHEDLSTGFPLFTMLKHWNGGLDWNRIELDQSFTVAACPSLRFTPLPLRSAAPPYSPHRFDPHPGDNIGLIVEDLGTGGKLFYAPGLGKVDAPLLEIMAGSDCVLVDGTMWDDDEMQRRGVGTRTGREMGHLAQNGPGGMLEVLEQLPEQRKVLIHINNTNPILDEDSPERAELVRRNVEVAYDGMSIVL.

Belongs to the PqqB family.

Its pathway is cofactor biosynthesis; pyrroloquinoline quinone biosynthesis. May be involved in the transport of PQQ or its precursor to the periplasm. This chain is Coenzyme PQQ synthesis protein B, found in Pseudomonas fluorescens (strain Pf0-1).